The sequence spans 297 residues: Chelated iron transport system membrane protein YfeD (297 aa).

The next 8 helical transmembrane spans lie at 20–40 (AIVA…YLVL), 58–78 (IVLA…SGIF), 96–116 (TVMG…FSRI), 133–153 (ISLT…LVVL), 172–192 (IGLP…LTIV), 197–217 (AVGV…AFMI), 224–244 (MLVV…LISF), and 248–268 (GATG…ALIY).

The protein belongs to the ABC-3 integral membrane protein family.

The protein localises to the cell inner membrane. Its function is as follows. Part of an ATP-driven transport system YfeABCD for chelated iron. The chain is Chelated iron transport system membrane protein YfeD (yfeD) from Yersinia pestis.